Here is a 166-residue protein sequence, read N- to C-terminus: Phosphopantetheine adenylyltransferase (166 aa).

Threonine 9 provides a ligand contact to substrate. Residues 9-10 and histidine 17 each bind ATP; that span reads TF. Residues lysine 41, leucine 78, and arginine 92 each coordinate substrate. ATP-binding positions include 93 to 95, glutamate 103, and 128 to 134; these read GLR and HQAIASK.

This sequence belongs to the bacterial CoaD family. As to quaternary structure, homohexamer. It depends on Mg(2+) as a cofactor.

It localises to the cytoplasm. It catalyses the reaction (R)-4'-phosphopantetheine + ATP + H(+) = 3'-dephospho-CoA + diphosphate. It participates in cofactor biosynthesis; coenzyme A biosynthesis; CoA from (R)-pantothenate: step 4/5. Its function is as follows. Reversibly transfers an adenylyl group from ATP to 4'-phosphopantetheine, yielding dephospho-CoA (dPCoA) and pyrophosphate. This Roseobacter denitrificans (strain ATCC 33942 / OCh 114) (Erythrobacter sp. (strain OCh 114)) protein is Phosphopantetheine adenylyltransferase.